We begin with the raw amino-acid sequence, 439 residues long: Phosphoribosylamine--glycine ligase (439 aa).

Residues 109 to 317 enclose the ATP-grasp domain; sequence REFMERNKIP…LVEISERIID (209 aa). 136 to 195 contacts ATP; the sequence is IDEFGKPVVVKPLGLTGGKGVKVVGYQLKDNEEAKEYAEYLIRKDGKVLIEERTDGVEFT. Positions 275, 287, and 289 each coordinate Mg(2+). Residues glutamine 275, glutamate 287, and asparagine 289 each coordinate Mn(2+).

This sequence belongs to the GARS family. Mg(2+) is required as a cofactor. It depends on Mn(2+) as a cofactor.

It catalyses the reaction 5-phospho-beta-D-ribosylamine + glycine + ATP = N(1)-(5-phospho-beta-D-ribosyl)glycinamide + ADP + phosphate + H(+). Its pathway is purine metabolism; IMP biosynthesis via de novo pathway; N(1)-(5-phospho-D-ribosyl)glycinamide from 5-phospho-alpha-D-ribose 1-diphosphate: step 2/2. The polypeptide is Phosphoribosylamine--glycine ligase (Pyrococcus furiosus (strain ATCC 43587 / DSM 3638 / JCM 8422 / Vc1)).